The primary structure comprises 339 residues: 4-hydroxy-2-oxovalerate aldolase (339 aa).

In terms of domain architecture, Pyruvate carboxyltransferase spans V7–M259. R15–D16 lines the substrate pocket. Mn(2+) is bound at residue D16. H19 serves as the catalytic Proton acceptor. Substrate is bound by residues S169 and H198. The Mn(2+) site is built by H198 and H200. Y289 provides a ligand contact to substrate.

It belongs to the 4-hydroxy-2-oxovalerate aldolase family.

It catalyses the reaction (S)-4-hydroxy-2-oxopentanoate = acetaldehyde + pyruvate. The polypeptide is 4-hydroxy-2-oxovalerate aldolase (Marinomonas sp. (strain MWYL1)).